Here is a 384-residue protein sequence, read N- to C-terminus: MDPNNCSHLNLEVDPFLSCNNTFNQTLNPPKMDNWFHPGIIYVIPAVYGLIIVIGLIGNITLIKIFCTVKSMRNVPNLFISSLALGDLLLLVTCAPVDASKYLADRWLFGRIGCKLIPFIQLTSVGVSVFTLTALSADRYKAIVRPMDIQASHALMKICLKAALIWIVSMLLAIPEAVFSDLHPFHVKDTNQTFISCAPYPHSNELHPKIHSMASFLVFYIIPLSIISVYYYFIARNLIQSAYNLPVEGNIHVKKQIESRKRLAKTVLVFVGLFAFCWLPNHVIYLYRSYHYSEVDTSMLHFITSICARLLAFTNSCVNPFALYLLSKSFRKQFNTQLLCCQPSLLNRSHSTGRSTTCMTSFKSTNPSATFSLINGNICHEGYV.

Topologically, residues 1–39 (MDPNNCSHLNLEVDPFLSCNNTFNQTLNPPKMDNWFHPG) are extracellular. 3 N-linked (GlcNAc...) asparagine glycosylation sites follow: Asn-5, Asn-20, and Asn-24. The chain crosses the membrane as a helical span at residues 40-63 (IIYVIPAVYGLIIVIGLIGNITLI). Residues 64–77 (KIFCTVKSMRNVPN) are Cytoplasmic-facing. A helical transmembrane segment spans residues 78–97 (LFISSLALGDLLLLVTCAPV). Residues 98–115 (DASKYLADRWLFGRIGCK) lie on the Extracellular side of the membrane. A disulfide bridge connects residues Cys-114 and Cys-197. A helical membrane pass occupies residues 116 to 137 (LIPFIQLTSVGVSVFTLTALSA). At 138–153 (DRYKAIVRPMDIQASH) the chain is on the cytoplasmic side. Residues 154 to 175 (ALMKICLKAALIWIVSMLLAIP) traverse the membrane as a helical segment. The Extracellular segment spans residues 176–209 (EAVFSDLHPFHVKDTNQTFISCAPYPHSNELHPK). The chain crosses the membrane as a helical span at residues 210 to 235 (IHSMASFLVFYIIPLSIISVYYYFIA). The Cytoplasmic portion of the chain corresponds to 236–265 (RNLIQSAYNLPVEGNIHVKKQIESRKRLAK). A helical membrane pass occupies residues 266-286 (TVLVFVGLFAFCWLPNHVIYL). The Extracellular portion of the chain corresponds to 287–299 (YRSYHYSEVDTSM). The chain crosses the membrane as a helical span at residues 300 to 326 (LHFITSICARLLAFTNSCVNPFALYLL). Over 327-384 (SKSFRKQFNTQLLCCQPSLLNRSHSTGRSTTCMTSFKSTNPSATFSLINGNICHEGYV) the chain is Cytoplasmic. Residue Cys-340 is the site of S-palmitoyl cysteine attachment. A Phosphoserine modification is found at Ser-351.

The protein belongs to the G-protein coupled receptor 1 family. As to expression, expressed in the hippocampal CA1 region (at protein level).

The protein localises to the cell membrane. Its function is as follows. Receptor for gastrin-releasing peptide (GRP). Signals via association with G proteins that activate a phosphatidylinositol-calcium second messenger system, resulting in Akt phosphorylation. Contributes to the regulation of food intake. Contributes to the perception of prurient stimuli and transmission of itch signals in the spinal cord that promote scratching behavior, but does not play a role in the perception of pain. Contributes primarily to nonhistaminergic itch sensation. In one study, shown to act in the amygdala as part of an inhibitory network which inhibits memory specifically related to learned fear. In another study, shown to contribute to disinhibition of glutamatergic cells in the auditory cortex via signaling on vasoactive intestinal peptide-expressing cells which leads to enhanced auditory fear memories. Contributes to the induction of sighing through signaling in the pre-Botzinger complex, a cluster of several thousand neurons in the ventrolateral medulla responsible for inspiration during respiratory activity. The chain is Gastrin-releasing peptide receptor (Grpr) from Rattus norvegicus (Rat).